A 503-amino-acid chain; its full sequence is MSKVIGKVAQIIGPVVDVVFNGKDVELPKIYDSLEVTKKDGTLLVLEVQSHIGENTVRTISMDSTDGLSRGYEVVGTGNPIQMPIGPDVYGRLFNVVGDAIDGLGNLPKTGENGLPIHRQAPKFEDLSTSSEVLFTGIKVIDLIEPYAKGGKIGLFGGAGVGKTVLIQELINNIAKGHGGLSVFAGVGERTREGNDLLREMLESGIIKYGDDFMHSMENGGWDLSKVDMPGMRESKATFVFGQMNEPPGARARVALSGLSIAEYFRDGAGSDQGKDVLFFVDNIFRFTQAGSEVSALLGRMPSAVGYQPTLATEMGAMQERITSTNKGSITSVQAVYVPADDLTDPAPATTFAHLDATTVLSRKIAELGIYPAVDPLDSTSRILTPHILGDEHYNCAQRVKEILQKYKQLQDIIAILGMEELSEEDKLSVSRARRVQRFLSQPFHVAEQFTGIPGVLVDIKDTIKGFNMIIDGELDHLPEAAFNLKGSIQDAIEAGEKMLAEA.

Position 157–164 (157–164) interacts with ATP; that stretch reads GGAGVGKT.

The protein belongs to the ATPase alpha/beta chains family. As to quaternary structure, F-type ATPases have 2 components, CF(1) - the catalytic core - and CF(0) - the membrane proton channel. CF(1) has five subunits: alpha(3), beta(3), gamma(1), delta(1), epsilon(1). CF(0) has three main subunits: a(1), b(2) and c(9-12). The alpha and beta chains form an alternating ring which encloses part of the gamma chain. CF(1) is attached to CF(0) by a central stalk formed by the gamma and epsilon chains, while a peripheral stalk is formed by the delta and b chains.

It localises to the cell inner membrane. The enzyme catalyses ATP + H2O + 4 H(+)(in) = ADP + phosphate + 5 H(+)(out). Produces ATP from ADP in the presence of a proton gradient across the membrane. The catalytic sites are hosted primarily by the beta subunits. The protein is ATP synthase subunit beta of Flavobacterium johnsoniae (strain ATCC 17061 / DSM 2064 / JCM 8514 / BCRC 14874 / CCUG 350202 / NBRC 14942 / NCIMB 11054 / UW101) (Cytophaga johnsonae).